A 452-amino-acid polypeptide reads, in one-letter code: MMITLRKLPLAVAVAAGVMSAQAMAVDFHGYARSGIGWTGSGGEQQCFQATGAQSKYRLGNECETYAELKLGQEVWKEGDKSFYFDTNVAYSVNQQNDWESTDPAFREANVQGKNLIEWLPGSTIWAGKRFYQRHDVHMIDFYYWDISGPGAGIENIDLGFGKLSLAATRSTEAGGSYTFSSQNIYDEVKDTANDVFDVRLAGLQTNPDGVLELGVDYGRANTTDGYKLADGASKDGWMFTAEHTQSMLKGYNKFVVQYATDAMTTQGKGQARGSDGSSSFTEELPDGTKINYANKVINNNGDMWRILDHGAISLGDKWDLMYVGMYQNIDWDNNLGTEWWTVGVRPMYKWTPIMSTLLEVGYDNVKSQQTGDRNNQYKITLAQQWQAGDSIWSRPAIRIFATYAKWDEKWGYIKDGDNISRYAAATNSGISTNSRGDSDEWTFGAQMEIWW.

Residues 1 to 25 form the signal peptide; sequence MMITLRKLPLAVAVAAGVMSAQAMA.

Belongs to the porin LamB (TC 1.B.3) family. In terms of assembly, homotrimer formed of three 18-stranded antiparallel beta-barrels, containing three independent channels.

Its subcellular location is the cell outer membrane. The enzyme catalyses beta-maltose(in) = beta-maltose(out). In terms of biological role, involved in the transport of maltose and maltodextrins. In Salmonella choleraesuis (strain SC-B67), this protein is Maltoporin.